Reading from the N-terminus, the 117-residue chain is Large ribosomal subunit protein bL20 (117 aa).

Belongs to the bacterial ribosomal protein bL20 family.

Functionally, binds directly to 23S ribosomal RNA and is necessary for the in vitro assembly process of the 50S ribosomal subunit. It is not involved in the protein synthesizing functions of that subunit. In Campylobacter fetus subsp. fetus (strain 82-40), this protein is Large ribosomal subunit protein bL20.